The following is a 266-amino-acid chain: Thymidylate synthase (266 aa).

Arginine 24 contributes to the dUMP binding site. Position 54 (histidine 54) interacts with (6R)-5,10-methylene-5,6,7,8-tetrahydrofolate. Position 129–130 (129–130 (RR)) interacts with dUMP. Cysteine 149 functions as the Nucleophile in the catalytic mechanism. Residues 169–172 (RSAD), asparagine 180, and 210–212 (HIY) each bind dUMP. Aspartate 172 serves as a coordination point for (6R)-5,10-methylene-5,6,7,8-tetrahydrofolate. Alanine 265 lines the (6R)-5,10-methylene-5,6,7,8-tetrahydrofolate pocket.

Belongs to the thymidylate synthase family. Bacterial-type ThyA subfamily. In terms of assembly, homodimer.

The protein resides in the cytoplasm. The enzyme catalyses dUMP + (6R)-5,10-methylene-5,6,7,8-tetrahydrofolate = 7,8-dihydrofolate + dTMP. The protein operates within pyrimidine metabolism; dTTP biosynthesis. Catalyzes the reductive methylation of 2'-deoxyuridine-5'-monophosphate (dUMP) to 2'-deoxythymidine-5'-monophosphate (dTMP) while utilizing 5,10-methylenetetrahydrofolate (mTHF) as the methyl donor and reductant in the reaction, yielding dihydrofolate (DHF) as a by-product. This enzymatic reaction provides an intracellular de novo source of dTMP, an essential precursor for DNA biosynthesis. The polypeptide is Thymidylate synthase (Corynebacterium glutamicum (strain R)).